The sequence spans 125 residues: Larval cuticle protein LCP-14 (125 aa).

The signal sequence occupies residues 1 to 16; it reads MKSFIVALCVVGCVLA. In terms of domain architecture, Chitin-binding type R&amp;R spans 33–102; the sequence is EGSYNYAFES…PQADFLPTPP (70 aa).

Component of the cuticle of the larva of tobacco hornworm. The protein is Larval cuticle protein LCP-14 (LCP-14) of Manduca sexta (Tobacco hawkmoth).